A 450-amino-acid polypeptide reads, in one-letter code: Tol-Pal system protein TolB (450 aa).

The N-terminal stretch at Met1 to Ala47 is a signal peptide.

The protein belongs to the TolB family. As to quaternary structure, the Tol-Pal system is composed of five core proteins: the inner membrane proteins TolA, TolQ and TolR, the periplasmic protein TolB and the outer membrane protein Pal. They form a network linking the inner and outer membranes and the peptidoglycan layer.

It is found in the periplasm. In terms of biological role, part of the Tol-Pal system, which plays a role in outer membrane invagination during cell division and is important for maintaining outer membrane integrity. This Cupriavidus pinatubonensis (strain JMP 134 / LMG 1197) (Cupriavidus necator (strain JMP 134)) protein is Tol-Pal system protein TolB.